Reading from the N-terminus, the 767-residue chain is 5-methyltetrahydropteroyltriglutamate--homocysteine methyltransferase (767 aa).

Lys126 serves as a coordination point for 5-methyltetrahydropteroyltri-L-glutamate. Residues Ile445–Ser447 and Glu498 contribute to the L-homocysteine site. Residues Ile445 to Ser447 and Glu498 each bind L-methionine. 5-methyltetrahydropteroyltri-L-glutamate is bound by residues Arg529–Cys530 and Trp575. L-homocysteine is bound at residue Asp613. Asp613 is an L-methionine binding site. Residue Glu619 participates in 5-methyltetrahydropteroyltri-L-glutamate binding. 3 residues coordinate Zn(2+): His655, Cys657, and Glu679. His708 acts as the Proton donor in catalysis. Residue Cys740 coordinates Zn(2+).

Belongs to the vitamin-B12 independent methionine synthase family. Zn(2+) is required as a cofactor.

It catalyses the reaction 5-methyltetrahydropteroyltri-L-glutamate + L-homocysteine = tetrahydropteroyltri-L-glutamate + L-methionine. It functions in the pathway amino-acid biosynthesis; L-methionine biosynthesis via de novo pathway; L-methionine from L-homocysteine (MetE route): step 1/1. Functionally, catalyzes the transfer of a methyl group from 5-methyltetrahydrofolate to homocysteine resulting in methionine formation. This Psychromonas ingrahamii (strain DSM 17664 / CCUG 51855 / 37) protein is 5-methyltetrahydropteroyltriglutamate--homocysteine methyltransferase.